An 839-amino-acid polypeptide reads, in one-letter code: A disintegrin and metalloproteinase with thrombospondin motifs 4 (839 aa).

The first 51 residues, 1-51 (MSHMDSHPGRGLADGWLWGIQPRLLLPTVPVSGSRLVWLLLLASLLPSAWP), serve as a signal peptide directing secretion. A propeptide spanning residues 52–212 (ASPLPREEEI…PSPSPRRAKR (161 aa)) is cleaved from the precursor. A glycan (N-linked (GlcNAc...) asparagine) is linked at Asn-68. The tract at residues 166 to 209 (EGGAPNSAGGPGAHILRRKSPVSGQGPMCNVKAPPGKPSPSPRR) is disordered. Residues 192-199 (PMCNVKAP) carry the Cysteine switch motif. Position 194 (Cys-194) interacts with Zn(2+). In terms of domain architecture, Peptidase M12B spans 218-428 (RFVETLVVAD…GFGHCLLDKP (211 aa)). 11 disulfide bridges follow: Cys-293–Cys-345, Cys-322–Cys-327, Cys-339–Cys-423, Cys-377–Cys-407, Cys-449–Cys-472, Cys-460–Cys-482, Cys-467–Cys-501, Cys-495–Cys-506, Cys-532–Cys-569, Cys-536–Cys-574, and Cys-547–Cys-559. His-361 serves as a coordination point for Zn(2+). Glu-362 is an active-site residue. Zn(2+)-binding residues include His-365 and His-371. A Disintegrin domain is found at 437-519 (TFPGKDYDAD…DQLQAFNVPQ (83 aa)). Residues 520–575 (AGGWGPWGSWGDCSRSCGGGVQFSSRDCTRPVPRNGGKYCEGRRTRFRSCNTQDCP) form the TSP type-1 domain. Residues 686 to 839 (SKQSGSFKKF…LRRRSWAGRK (154 aa)) form a spacer region.

In terms of assembly, interacts with SRPX2. Zn(2+) serves as cofactor. Post-translationally, the precursor is cleaved by a furin endopeptidase. In terms of processing, glycosylated. Can be O-fucosylated by POFUT2 on a serine or a threonine residue found within the consensus sequence C1-X(2)-(S/T)-C2-G of the TSP type-1 repeat domains where C1 and C2 are the first and second cysteine residue of the repeat, respectively. Fucosylated repeats can then be further glycosylated by the addition of a beta-1,3-glucose residue by the glucosyltransferase, B3GALTL. Fucosylation mediates the efficient secretion of ADAMTS family members. Can also be C-glycosylated with one or two mannose molecules on tryptophan residues within the consensus sequence W-X-X-W of the TPRs, and N-glycosylated. These other glycosylations can also facilitate secretion.

The protein resides in the secreted. The protein localises to the extracellular space. It localises to the extracellular matrix. It carries out the reaction Glutamyl endopeptidase. Bonds cleaved include 370-Thr-Glu-Gly-Glu-|-Ala-Arg-Gly-Ser-377 in the interglobular domain of mammalian aggrecan.. Cleaves aggrecan, a cartilage proteoglycan, at the '392-Glu-|-Ala-393' site and may be involved in its turnover. Also cleaves COMP. May play an important role in the destruction of aggrecan in arthritic diseases. The chain is A disintegrin and metalloproteinase with thrombospondin motifs 4 (ADAMTS4) from Bos taurus (Bovine).